The chain runs to 568 residues: Protein disconnected (568 aa).

Positions 16–77 are disordered; that stretch reads GHGPHSHQHV…PRRWGSPPIN (62 aa). The span at 19 to 29 shows a compositional bias: basic residues; that stretch reads PHSHQHVHSHL. The span at 30-45 shows a compositional bias: low complexity; it reads PSHPQPNAASPASSPG. Gly residues predominate over residues 46–62; the sequence is GSSGSGSGSAAGSGTGS. 2 C2H2-type zinc fingers span residues 92–115 and 120–145; these read VQCS…SAVH and HKCT…ANPN. Disordered stretches follow at residues 134–157, 220–364, 391–419, and 501–568; these read RRSR…RRKI, LLST…SDAF, SSAS…DSDS, and QQYN…PISV. Acidic residues predominate over residues 235–246; sequence NEQDADPEDDND. Residues 253 to 263 show a composition bias toward polar residues; the sequence is QANSSSPAASS. Low complexity predominate over residues 282 to 292; that stretch reads SLSLASSSSIA. Over residues 313–360 the composition is skewed to basic and acidic residues; sequence SEQDREQEQEQEQEREREAEKEQEQDVESDKEHEPEQEHELEREKRSP. The span at 391 to 402 shows a compositional bias: low complexity; it reads SSASSSSASASA. The span at 520–550 shows a compositional bias: basic residues; it reads HLTLSHHHQEQHHHLGHHHMGHHHHHHHQHH. A compositionally biased stretch (polar residues) spans 558 to 568; that stretch reads SPAATNAPISV.

As to expression, expressed at low levels in the adult head and very low, but detectable, levels in the body.

The protein localises to the nucleus. Its function is as follows. Required for the establishment of stable connections between the larval optic nerves, the Bolwig's nerves, and their target cells in the brain during embryonic development. The polypeptide is Protein disconnected (disco) (Drosophila melanogaster (Fruit fly)).